We begin with the raw amino-acid sequence, 481 residues long: Proline--tRNA ligase (481 aa).

It belongs to the class-II aminoacyl-tRNA synthetase family. ProS type 3 subfamily. As to quaternary structure, homodimer.

It is found in the cytoplasm. It catalyses the reaction tRNA(Pro) + L-proline + ATP = L-prolyl-tRNA(Pro) + AMP + diphosphate. Functionally, catalyzes the attachment of proline to tRNA(Pro) in a two-step reaction: proline is first activated by ATP to form Pro-AMP and then transferred to the acceptor end of tRNA(Pro). This is Proline--tRNA ligase from Chlorobium phaeobacteroides (strain BS1).